A 303-amino-acid polypeptide reads, in one-letter code: uncharacterized protein (303 aa).

An N-terminal signal peptide occupies residues Met-1–Ser-24. A glycan (N-linked (GlcNAc...) asparagine) is linked at Asn-116. A disordered region spans residues Phe-124–Asn-179. Acidic residues predominate over residues Asp-135–Glu-149. A compositionally biased stretch (basic residues) spans Lys-155–Lys-164. Residues Ala-167 to Pro-178 are compositionally biased toward polar residues.

This is an uncharacterized protein from Caenorhabditis elegans.